A 98-amino-acid polypeptide reads, in one-letter code: Large ribosomal subunit protein bL27 (98 aa).

Polar residues predominate over residues 1 to 11; it reads MASKASGGSTR. The disordered stretch occupies residues 1–20; that stretch reads MASKASGGSTRNGRDSISKR.

Belongs to the bacterial ribosomal protein bL27 family.

This Aquifex aeolicus (strain VF5) protein is Large ribosomal subunit protein bL27.